The sequence spans 453 residues: Bifunctional protein GlmU (453 aa).

The segment at 1–226 is pyrophosphorylase; the sequence is MSFSAVILAA…PIEVEGVNNR (226 aa). Residues 8–11, Lys-22, Gln-73, 78–79, 100–102, Gly-137, Glu-151, Asn-166, and Asn-224 contribute to the UDP-N-acetyl-alpha-D-glucosamine site; these read LAAG, GT, and YGD. Asp-102 lines the Mg(2+) pocket. Residue Asn-224 participates in Mg(2+) binding. The linker stretch occupies residues 227–247; sequence IQLARLERAYQAMQAERLLEQ. The interval 248–453 is N-acetyltransferase; sequence GVMLRDPSRF…KGWKRPVKQK (206 aa). UDP-N-acetyl-alpha-D-glucosamine contacts are provided by Arg-330 and Lys-348. The Proton acceptor role is filled by His-360. Residues Tyr-363 and Asn-374 each contribute to the UDP-N-acetyl-alpha-D-glucosamine site. Acetyl-CoA-binding positions include Ala-377, 383 to 384, Ser-402, Ala-420, and Arg-437; that span reads NY.

The protein in the N-terminal section; belongs to the N-acetylglucosamine-1-phosphate uridyltransferase family. This sequence in the C-terminal section; belongs to the transferase hexapeptide repeat family. In terms of assembly, homotrimer. Mg(2+) is required as a cofactor.

The protein resides in the cytoplasm. It carries out the reaction alpha-D-glucosamine 1-phosphate + acetyl-CoA = N-acetyl-alpha-D-glucosamine 1-phosphate + CoA + H(+). The catalysed reaction is N-acetyl-alpha-D-glucosamine 1-phosphate + UTP + H(+) = UDP-N-acetyl-alpha-D-glucosamine + diphosphate. It functions in the pathway nucleotide-sugar biosynthesis; UDP-N-acetyl-alpha-D-glucosamine biosynthesis; N-acetyl-alpha-D-glucosamine 1-phosphate from alpha-D-glucosamine 6-phosphate (route II): step 2/2. The protein operates within nucleotide-sugar biosynthesis; UDP-N-acetyl-alpha-D-glucosamine biosynthesis; UDP-N-acetyl-alpha-D-glucosamine from N-acetyl-alpha-D-glucosamine 1-phosphate: step 1/1. It participates in bacterial outer membrane biogenesis; LPS lipid A biosynthesis. In terms of biological role, catalyzes the last two sequential reactions in the de novo biosynthetic pathway for UDP-N-acetylglucosamine (UDP-GlcNAc). The C-terminal domain catalyzes the transfer of acetyl group from acetyl coenzyme A to glucosamine-1-phosphate (GlcN-1-P) to produce N-acetylglucosamine-1-phosphate (GlcNAc-1-P), which is converted into UDP-GlcNAc by the transfer of uridine 5-monophosphate (from uridine 5-triphosphate), a reaction catalyzed by the N-terminal domain. The polypeptide is Bifunctional protein GlmU (Photobacterium profundum (strain SS9)).